Here is a 646-residue protein sequence, read N- to C-terminus: Alkyl/aryl-sulfatase BDS1 (646 aa).

The residue at position 1 (Met-1) is an N-acetylmethionine. Zn(2+) contacts are provided by His-162, His-164, Asp-166, His-167, Glu-273, Glu-292, and His-337.

The protein belongs to the metallo-beta-lactamase superfamily. Type III sulfatase family. The cofactor is Zn(2+).

Alkyl/aryl-sulfatase. Enables the use of SDS and 4-nitrocatechol as sulfur source. The protein is Alkyl/aryl-sulfatase BDS1 (BDS1) of Saccharomyces cerevisiae (strain ATCC 204508 / S288c) (Baker's yeast).